The chain runs to 204 residues: Tumor necrosis factor receptor superfamily member 26 (204 aa).

A signal peptide spans 1–19 (MTRLRLLLLLGLLLRVAVC). Residues 20 to 164 (SVNTITLCKI…SQCFCFSKPL (145 aa)) lie on the Extracellular side of the membrane. Disulfide bonds link Cys-27-Cys-38, Cys-39-Cys-52, Cys-42-Cys-61, Cys-64-Cys-79, Cys-82-Cys-95, Cys-85-Cys-103, Cys-105-Cys-120, Cys-123-Cys-135, and Cys-126-Cys-143. TNFR-Cys repeat units lie at residues 27-61 (CKIG…KSEC), 63-103 (PCDS…DRVC), and 104-143 (QCKQ…DTVC). N-linked (GlcNAc...) asparagine glycosylation occurs at Asn-57. Asn-136 carries an N-linked (GlcNAc...) asparagine glycan. The chain crosses the membrane as a helical span at residues 165 to 185 (GIVVIIAAFIIIIGAVIILIL). The Cytoplasmic portion of the chain corresponds to 186 to 204 (KIICYCKRGENIQLSSTML).

In terms of tissue distribution, expressed in thymus and spleen. Detectable levels in lung.

Its subcellular location is the membrane. The polypeptide is Tumor necrosis factor receptor superfamily member 26 (Tnfrsf26) (Mus musculus (Mouse)).